A 290-amino-acid polypeptide reads, in one-letter code: Ribosomal RNA small subunit methyltransferase A (290 aa).

6 residues coordinate S-adenosyl-L-methionine: Asn27, Leu29, Gly54, Glu75, Asp100, and Asn125.

The protein belongs to the class I-like SAM-binding methyltransferase superfamily. rRNA adenine N(6)-methyltransferase family. RsmA subfamily.

The protein resides in the cytoplasm. It carries out the reaction adenosine(1518)/adenosine(1519) in 16S rRNA + 4 S-adenosyl-L-methionine = N(6)-dimethyladenosine(1518)/N(6)-dimethyladenosine(1519) in 16S rRNA + 4 S-adenosyl-L-homocysteine + 4 H(+). Specifically dimethylates two adjacent adenosines (A1518 and A1519) in the loop of a conserved hairpin near the 3'-end of 16S rRNA in the 30S particle. May play a critical role in biogenesis of 30S subunits. This is Ribosomal RNA small subunit methyltransferase A from Streptococcus pyogenes serotype M5 (strain Manfredo).